The chain runs to 123 residues: UPF0102 protein Maqu_2464 (123 aa).

Belongs to the UPF0102 family.

This Marinobacter nauticus (strain ATCC 700491 / DSM 11845 / VT8) (Marinobacter aquaeolei) protein is UPF0102 protein Maqu_2464.